Here is a 35-residue protein sequence, read N- to C-terminus: Cupiennin-2a (35 aa).

K35 is subject to Lysine amide.

Expressed by the venom gland.

The protein localises to the secreted. The protein is Cupiennin-2a of Cupiennius salei (American wandering spider).